Consider the following 481-residue polypeptide: MRHSKRTHCPDWDSRESWGHESYRGSHKRKRRSHSSTQENRHCKPHHQFKESDCHYLEARSLNERDYRDRRYVDEYRNDYCEGYVPRHYHRDIESGYRIHCSKSSVRSRRSSPKRKRNRHCSSHQSRSKSHRRKRSRSIEDDEEGHLICQSGDVLRARYEIVDTLGEGAFGKVVECIDHGMDGMHVAVKIVKNVGRYREAARSEIQVLEHLNSTDPNSVFRCVQMLEWFDHHGHVCIVFELLGLSTYDFIKENSFLPFQIDHIRQMAYQICQSINFLHHNKLTHTDLKPENILFVKSDYVVKYNSKMKRDERTLKNTDIKVVDFGSATYDDEHHSTLVSTRHYRAPEVILALGWSQPCDVWSIGCILIEYYLGFTVFQTHDSKEHLAMMERILGPIPQHMIQKTRKRKYFHHNQLDWDEHSSAGRYVRRRCKPLKEFMLCHDEEHEKLFDLVRRMLEYDPTQRITLDEALQHPFFDLLKKK.

2 disordered regions span residues 1 to 46 (MRHS…CKPH) and 102 to 143 (SKSS…EDDE). A compositionally biased stretch (basic and acidic residues) spans 8-24 (HCPDWDSRESWGHESYR). Composition is skewed to basic residues over residues 25–34 (GSHKRKRRSH) and 106–136 (VRSR…RKRS). A phosphoserine mark is found at Ser-136 and Ser-138. One can recognise a Protein kinase domain in the interval 159–475 (YEIVDTLGEG…LDEALQHPFF (317 aa)). ATP is bound by residues 165–173 (LGEGAFGKV) and Lys-189. Asp-286 acts as the Proton acceptor in catalysis.

This sequence belongs to the protein kinase superfamily. CMGC Ser/Thr protein kinase family. Lammer subfamily. As to quaternary structure, interacts with UBL5. Autophosphorylates on all three types of residues. As to expression, expressed in liver, kidney, heart, muscle, brain and endothelial cells.

Its subcellular location is the nucleus. The catalysed reaction is L-seryl-[protein] + ATP = O-phospho-L-seryl-[protein] + ADP + H(+). The enzyme catalyses L-threonyl-[protein] + ATP = O-phospho-L-threonyl-[protein] + ADP + H(+). It catalyses the reaction L-tyrosyl-[protein] + ATP = O-phospho-L-tyrosyl-[protein] + ADP + H(+). TG003 inhibits its kinase activity and affects the regulation of alternative splicing mediated by phosphorylation of SR proteins. Its function is as follows. Dual specificity kinase acting on both serine/threonine and tyrosine-containing substrates. Phosphorylates serine- and arginine-rich (SR) proteins of the spliceosomal complex and may be a constituent of a network of regulatory mechanisms that enable SR proteins to control RNA splicing. Phosphorylates SRSF1 and SRSF3. Required for the regulation of alternative splicing of MAPT/TAU. Regulates the alternative splicing of tissue factor (F3) pre-mRNA in endothelial cells. The protein is Dual specificity protein kinase CLK4 (CLK4) of Homo sapiens (Human).